A 228-amino-acid chain; its full sequence is UPF0173 metal-dependent hydrolase lin1612 (228 aa).

Belongs to the UPF0173 family.

The chain is UPF0173 metal-dependent hydrolase lin1612 from Listeria innocua serovar 6a (strain ATCC BAA-680 / CLIP 11262).